Consider the following 217-residue polypeptide: MRVRNRKGAGEMLAENAHIVVENPADFKGRWSERFGNDHPIHIEVGCGKGAFITGMAALHPEINYIAIDMQLSVLSYALDKAIEADLPNVQMMLVDGAALSEYFADGEIDQVYLNFSDPWPKGRHEKRRLTYKSFLATYEKILRPEGEIHFKTDNRGLFEYSLVSLANYGMELKKVWLDLHQDEEFAPQNVMTEYEQKFSQKGQVIYRLEAKFLPKK.

Residues glutamate 44, aspartate 69, aspartate 96, and aspartate 118 each coordinate S-adenosyl-L-methionine. Aspartate 118 is a catalytic residue. Lysine 122 serves as a coordination point for substrate. The segment at 124-129 (RHEKRR) is interaction with RNA. Residues aspartate 154 and 193 to 196 (TEYE) each bind substrate.

It belongs to the class I-like SAM-binding methyltransferase superfamily. TrmB family.

It carries out the reaction guanosine(46) in tRNA + S-adenosyl-L-methionine = N(7)-methylguanosine(46) in tRNA + S-adenosyl-L-homocysteine. Its pathway is tRNA modification; N(7)-methylguanine-tRNA biosynthesis. Catalyzes the formation of N(7)-methylguanine at position 46 (m7G46) in tRNA. In Lactococcus lactis subsp. lactis (strain IL1403) (Streptococcus lactis), this protein is tRNA (guanine-N(7)-)-methyltransferase.